A 342-amino-acid polypeptide reads, in one-letter code: N-acetyl-gamma-glutamyl-phosphate reductase (342 aa).

Cys-149 is a catalytic residue.

This sequence belongs to the NAGSA dehydrogenase family. Type 1 subfamily.

It is found in the cytoplasm. It catalyses the reaction N-acetyl-L-glutamate 5-semialdehyde + phosphate + NADP(+) = N-acetyl-L-glutamyl 5-phosphate + NADPH + H(+). It functions in the pathway amino-acid biosynthesis; L-arginine biosynthesis; N(2)-acetyl-L-ornithine from L-glutamate: step 3/4. Functionally, catalyzes the NADPH-dependent reduction of N-acetyl-5-glutamyl phosphate to yield N-acetyl-L-glutamate 5-semialdehyde. The sequence is that of N-acetyl-gamma-glutamyl-phosphate reductase from Jannaschia sp. (strain CCS1).